The primary structure comprises 260 residues: 33 kDa inner dynein arm light chain, axonemal (260 aa).

Positions 1 to 66 (MIPPNASLVK…PVESQKAQQT (66 aa)) are disordered. A coiled-coil region spans residues 177-260 (MRKALQAEQG…LEGIIAPNKK (84 aa)).

The protein belongs to the inner dynein arm light chain family. Post-translationally, may undergo some post-translational modifications that shift its mobility on SDS gels.

Its function is as follows. May play a dynamic role in flagellar motility. In Strongylocentrotus purpuratus (Purple sea urchin), this protein is 33 kDa inner dynein arm light chain, axonemal.